A 407-amino-acid chain; its full sequence is MKEKLIDRLTSYVVIDTQSDASSTTTPSTDKQWNLLNQLKQEIEQLGLETDIDEYGYLFATLPSNTNKDVPVIGLLAHVDTATDFTGTNVNPQIIQSYDGNDITLKSGLKIETAKFPELSLYKGHTLITTDGTTLLGADNKAGIAEIMTAIEYLIAHPEIKHGKIRFGFTPDEEIGRGPHKFDVERFACDFAYTIDGGRRGELQYESFNAAGVNVTFNGVNVHPGSAKDKMVNALNLAVRFQSSLPANEVPEHTEGYEGFFHLMELNGNVERAQLSYIIRDHSREQFEARKVKMHEIITSIQNEYGEQAAHIEINDQYYNMGEKITPHPQLIDIPLEVMKSLNIEPIVEPIRGGTDGSQLSYMGLPTPNLFTGGENYHGPYEYVSVDDMERAVMNIVGILQKFEEKA.

A Zn(2+)-binding site is contributed by His78. The active site involves Asp80. Residue Asp139 participates in Zn(2+) binding. Glu173 (proton acceptor) is an active-site residue. Glu174, Asp196, and His378 together coordinate Zn(2+).

This sequence belongs to the peptidase M20B family. It depends on Zn(2+) as a cofactor.

Its subcellular location is the cytoplasm. It carries out the reaction Release of the N-terminal residue from a tripeptide.. Functionally, cleaves the N-terminal amino acid of tripeptides. The chain is Peptidase T from Macrococcus caseolyticus (strain JCSC5402) (Macrococcoides caseolyticum).